Reading from the N-terminus, the 155-residue chain is Ribosome maturation factor RimP (155 aa).

Belongs to the RimP family.

It is found in the cytoplasm. Its function is as follows. Required for maturation of 30S ribosomal subunits. This is Ribosome maturation factor RimP from Staphylococcus aureus (strain JH9).